We begin with the raw amino-acid sequence, 380 residues long: Probable cytosolic iron-sulfur protein assembly protein 1 (380 aa).

7 WD repeats span residues 10–49 (AHND…KFPL), 56–108 (THKR…VEYD), 135–175 (GHEN…EEFE), 182–221 (DHSQ…DEWS), 228–275 (GHEG…EEDK), 299–338 (VHKY…KWVI), and 346–380 (HGVH…LWNV).

It belongs to the WD repeat CIA1 family. In terms of assembly, interacts with NAR1.

Its subcellular location is the cytoplasm. It is found in the nucleus. Its function is as follows. Essential component of the cytosolic iron-sulfur (Fe/S) protein assembly machinery. Required for the maturation of extramitochondrial Fe/S proteins. In Candida dubliniensis (strain CD36 / ATCC MYA-646 / CBS 7987 / NCPF 3949 / NRRL Y-17841) (Yeast), this protein is Probable cytosolic iron-sulfur protein assembly protein 1.